A 276-amino-acid chain; its full sequence is Octopine-binding periplasmic protein (276 aa).

Residues 1 to 20 (MKLKTILCAALLLVAGQAAA) form the signal peptide. Cys-57 and Cys-64 are disulfide-bonded.

Belongs to the bacterial solute-binding protein 3 family.

The protein localises to the periplasm. Its function is as follows. Component of the octopine active transport system probably consisting of four subunits: Q, M, P and T. The polypeptide is Octopine-binding periplasmic protein (occT) (Agrobacterium tumefaciens (strain Ach5)).